Reading from the N-terminus, the 118-residue chain is Putative cytochrome P450 family member 4F30 (118 aa).

The disordered stretch occupies residues 1–64 (MVTPAGCLGG…GPLHILGTDG (64 aa)). The segment covering 28 to 43 (RAGQTGQAVSGAQVSS) has biased composition (polar residues).

The protein is Putative cytochrome P450 family member 4F30 (CYP4F30P) of Homo sapiens (Human).